Here is a 100-residue protein sequence, read N- to C-terminus: Urease subunit gamma (100 aa).

Belongs to the urease gamma subunit family. In terms of assembly, heterotrimer of UreA (gamma), UreB (beta) and UreC (alpha) subunits. Three heterotrimers associate to form the active enzyme.

It is found in the cytoplasm. It carries out the reaction urea + 2 H2O + H(+) = hydrogencarbonate + 2 NH4(+). Its pathway is nitrogen metabolism; urea degradation; CO(2) and NH(3) from urea (urease route): step 1/1. The protein is Urease subunit gamma of Prochlorococcus marinus (strain MIT 9301).